We begin with the raw amino-acid sequence, 426 residues long: Serine hydroxymethyltransferase (426 aa).

(6S)-5,6,7,8-tetrahydrofolate contacts are provided by residues Leu-113 and 117–119; that span reads GHL. At Lys-222 the chain carries N6-(pyridoxal phosphate)lysine. 363 to 365 lines the (6S)-5,6,7,8-tetrahydrofolate pocket; it reads SPF.

Belongs to the SHMT family. Homodimer. Pyridoxal 5'-phosphate serves as cofactor.

It localises to the cytoplasm. It catalyses the reaction (6R)-5,10-methylene-5,6,7,8-tetrahydrofolate + glycine + H2O = (6S)-5,6,7,8-tetrahydrofolate + L-serine. Its pathway is one-carbon metabolism; tetrahydrofolate interconversion. It functions in the pathway amino-acid biosynthesis; glycine biosynthesis; glycine from L-serine: step 1/1. Catalyzes the reversible interconversion of serine and glycine with tetrahydrofolate (THF) serving as the one-carbon carrier. This reaction serves as the major source of one-carbon groups required for the biosynthesis of purines, thymidylate, methionine, and other important biomolecules. Also exhibits THF-independent aldolase activity toward beta-hydroxyamino acids, producing glycine and aldehydes, via a retro-aldol mechanism. This Azobacteroides pseudotrichonymphae genomovar. CFP2 protein is Serine hydroxymethyltransferase.